The following is a 301-amino-acid chain: Prestalk A differentiation protein A (301 aa).

It belongs to the NmrA-type oxidoreductase family.

Involved in development and cell differentiation. This is Prestalk A differentiation protein A (padA) from Dictyostelium discoideum (Social amoeba).